We begin with the raw amino-acid sequence, 133 residues long: MLKLLWIALGGSLGALCRYGLSVLARWGLPPTVPWGTLAANLVGCFLIGGLWVLAAQYSFSEELRVFIFTGGIGSLTTFSTYSLESLLLLREGRVWAGLANVLVSNVLGLVLVAIGAGCALFLLGGPVAAFGA.

4 consecutive transmembrane segments (helical) span residues 4-24, 35-55, 66-86, and 107-127; these read LLWIALGGSLGALCRYGLSVL, WGTLAANLVGCFLIGGLWVLA, VFIFTGGIGSLTTFSTYSLES, and VLGLVLVAIGAGCALFLLGGP. Residues G74 and T77 each coordinate Na(+).

The protein belongs to the fluoride channel Fluc/FEX (TC 1.A.43) family.

The protein localises to the cell inner membrane. It catalyses the reaction fluoride(in) = fluoride(out). Na(+) is not transported, but it plays an essential structural role and its presence is essential for fluoride channel function. In terms of biological role, fluoride-specific ion channel. Important for reducing fluoride concentration in the cell, thus reducing its toxicity. This Salinibacter ruber (strain DSM 13855 / M31) protein is Fluoride-specific ion channel FluC.